A 163-amino-acid chain; its full sequence is uncharacterized protein (163 aa).

Residues 142–163 (PQIVISEHNNTKETSPSRQFEH) are disordered. Residues 153–163 (KETSPSRQFEH) show a composition bias toward polar residues.

Belongs to the RCAN family.

In terms of biological role, inhibits calcineurin-dependent transcriptional responses by binding to the catalytic domain of calcineurin. This is an uncharacterized protein from Schizosaccharomyces pombe (strain 972 / ATCC 24843) (Fission yeast).